The sequence spans 319 residues: Acetyl esterase (319 aa).

An Involved in the stabilization of the negatively charged intermediate by the formation of the oxyanion hole motif is present at residues 91–93 (HGG). Catalysis depends on residues Ser-165, Asp-262, and His-292.

It belongs to the 'GDXG' lipolytic enzyme family. In terms of assembly, homodimer. Interacts with MalT and MelA.

It is found in the cytoplasm. Functionally, displays esterase activity towards short chain fatty esters (acyl chain length of up to 8 carbons). Able to hydrolyze triacetylglycerol (triacetin) and tributyrylglycerol (tributyrin), but not trioleylglycerol (triolein) or cholesterol oleate. Negatively regulates MalT activity by antagonizing maltotriose binding. Inhibits MelA galactosidase activity. This chain is Acetyl esterase, found in Escherichia coli O6:H1 (strain CFT073 / ATCC 700928 / UPEC).